We begin with the raw amino-acid sequence, 308 residues long: Ribonuclease Z (308 aa).

Zn(2+) contacts are provided by histidine 62, histidine 64, aspartate 66, histidine 67, histidine 140, aspartate 211, and histidine 269. The active-site Proton acceptor is aspartate 66.

It belongs to the RNase Z family. Homodimer. Zn(2+) is required as a cofactor.

The enzyme catalyses Endonucleolytic cleavage of RNA, removing extra 3' nucleotides from tRNA precursor, generating 3' termini of tRNAs. A 3'-hydroxy group is left at the tRNA terminus and a 5'-phosphoryl group is left at the trailer molecule.. Functionally, zinc phosphodiesterase, which displays some tRNA 3'-processing endonuclease activity. Probably involved in tRNA maturation, by removing a 3'-trailer from precursor tRNA. This chain is Ribonuclease Z, found in Treponema denticola (strain ATCC 35405 / DSM 14222 / CIP 103919 / JCM 8153 / KCTC 15104).